A 158-amino-acid chain; its full sequence is Transcription elongation factor GreA (158 aa).

A coiled-coil region spans residues 4–75 (EKTYPMTQEG…TQLENMIRNA (72 aa)).

It belongs to the GreA/GreB family.

Necessary for efficient RNA polymerase transcription elongation past template-encoded arresting sites. The arresting sites in DNA have the property of trapping a certain fraction of elongating RNA polymerases that pass through, resulting in locked ternary complexes. Cleavage of the nascent transcript by cleavage factors such as GreA or GreB allows the resumption of elongation from the new 3'terminus. GreA releases sequences of 2 to 3 nucleotides. The chain is Transcription elongation factor GreA from Bacillus cereus (strain ATCC 10987 / NRS 248).